The following is a 241-amino-acid chain: UDP-2,3-diacylglucosamine hydrolase (241 aa).

Mn(2+) contacts are provided by aspartate 9, histidine 11, aspartate 42, asparagine 79, and histidine 114. 79–80 (NR) lines the substrate pocket. Aspartate 122, serine 160, asparagine 164, lysine 167, and histidine 195 together coordinate substrate. Mn(2+)-binding residues include histidine 195 and histidine 197.

It belongs to the LpxH family. The cofactor is Mn(2+).

It is found in the cell inner membrane. The catalysed reaction is UDP-2-N,3-O-bis[(3R)-3-hydroxytetradecanoyl]-alpha-D-glucosamine + H2O = 2-N,3-O-bis[(3R)-3-hydroxytetradecanoyl]-alpha-D-glucosaminyl 1-phosphate + UMP + 2 H(+). It participates in glycolipid biosynthesis; lipid IV(A) biosynthesis; lipid IV(A) from (3R)-3-hydroxytetradecanoyl-[acyl-carrier-protein] and UDP-N-acetyl-alpha-D-glucosamine: step 4/6. Functionally, hydrolyzes the pyrophosphate bond of UDP-2,3-diacylglucosamine to yield 2,3-diacylglucosamine 1-phosphate (lipid X) and UMP by catalyzing the attack of water at the alpha-P atom. Involved in the biosynthesis of lipid A, a phosphorylated glycolipid that anchors the lipopolysaccharide to the outer membrane of the cell. In Shewanella frigidimarina (strain NCIMB 400), this protein is UDP-2,3-diacylglucosamine hydrolase.